The chain runs to 444 residues: Homogentisate 1,2-dioxygenase (444 aa).

The active-site Proton acceptor is the His-298. Fe cation is bound by residues His-341 and Glu-347. Homogentisate is bound by residues Tyr-356 and His-377. His-377 lines the Fe cation pocket.

The protein belongs to the homogentisate dioxygenase family. In terms of assembly, hexamer; dimer of trimers. It depends on Fe cation as a cofactor.

It catalyses the reaction homogentisate + O2 = 4-maleylacetoacetate + H(+). The protein operates within amino-acid degradation; L-phenylalanine degradation; acetoacetate and fumarate from L-phenylalanine: step 4/6. Functionally, involved in the catabolism of homogentisate (2,5-dihydroxyphenylacetate or 2,5-OH-PhAc), a central intermediate in the degradation of phenylalanine and tyrosine. Catalyzes the oxidative ring cleavage of the aromatic ring of homogentisate to yield maleylacetoacetate. The chain is Homogentisate 1,2-dioxygenase from Burkholderia ambifaria (strain ATCC BAA-244 / DSM 16087 / CCUG 44356 / LMG 19182 / AMMD) (Burkholderia cepacia (strain AMMD)).